The chain runs to 493 residues: ATP synthase subunit beta, chloroplastic (493 aa).

170-177 (GGAGVGKT) serves as a coordination point for ATP.

Belongs to the ATPase alpha/beta chains family. F-type ATPases have 2 components, CF(1) - the catalytic core - and CF(0) - the membrane proton channel. CF(1) has five subunits: alpha(3), beta(3), gamma(1), delta(1), epsilon(1). CF(0) has four main subunits: a(1), b(1), b'(1) and c(9-12).

Its subcellular location is the plastid. The protein localises to the chloroplast thylakoid membrane. The enzyme catalyses ATP + H2O + 4 H(+)(in) = ADP + phosphate + 5 H(+)(out). Its function is as follows. Produces ATP from ADP in the presence of a proton gradient across the membrane. The catalytic sites are hosted primarily by the beta subunits. In Staurastrum punctulatum (Green alga), this protein is ATP synthase subunit beta, chloroplastic.